We begin with the raw amino-acid sequence, 393 residues long: Formate-dependent phosphoribosylglycinamide formyltransferase (393 aa).

N(1)-(5-phospho-beta-D-ribosyl)glycinamide-binding positions include 22-23 and glutamate 82; that span reads EL. ATP is bound by residues arginine 114, lysine 155, 160-165, 195-198, and glutamate 203; these read SSGKGQ and EGLV. The 190-residue stretch at 119 to 308 folds into the ATP-grasp domain; it reads LLAAETLQLP…EFALHVRAFL (190 aa). The Mg(2+) site is built by glutamate 267 and glutamate 279. N(1)-(5-phospho-beta-D-ribosyl)glycinamide is bound by residues aspartate 286, lysine 355, and 362-363; that span reads RR.

This sequence belongs to the PurK/PurT family. As to quaternary structure, homodimer.

It catalyses the reaction N(1)-(5-phospho-beta-D-ribosyl)glycinamide + formate + ATP = N(2)-formyl-N(1)-(5-phospho-beta-D-ribosyl)glycinamide + ADP + phosphate + H(+). The protein operates within purine metabolism; IMP biosynthesis via de novo pathway; N(2)-formyl-N(1)-(5-phospho-D-ribosyl)glycinamide from N(1)-(5-phospho-D-ribosyl)glycinamide (formate route): step 1/1. Functionally, involved in the de novo purine biosynthesis. Catalyzes the transfer of formate to 5-phospho-ribosyl-glycinamide (GAR), producing 5-phospho-ribosyl-N-formylglycinamide (FGAR). Formate is provided by PurU via hydrolysis of 10-formyl-tetrahydrofolate. The chain is Formate-dependent phosphoribosylglycinamide formyltransferase from Yersinia enterocolitica serotype O:8 / biotype 1B (strain NCTC 13174 / 8081).